The following is a 360-amino-acid chain: Phospho-N-acetylmuramoyl-pentapeptide-transferase (360 aa).

A run of 10 helical transmembrane segments spans residues 21–41 (YVTF…LWWG), 74–94 (MGGI…GDLA), 97–117 (YVWV…IDDY), 135–155 (ILQS…ADLV), 168–188 (IMPQ…VGSS), 199–219 (GLAI…AYLS), 236–256 (AGEL…FLWF), 263–283 (VFMG…IAVL), 288–308 (ILLV…ILQV), and 338–358 (VIVR…ATLK).

This sequence belongs to the glycosyltransferase 4 family. MraY subfamily. The cofactor is Mg(2+).

It is found in the cell inner membrane. The enzyme catalyses UDP-N-acetyl-alpha-D-muramoyl-L-alanyl-gamma-D-glutamyl-meso-2,6-diaminopimeloyl-D-alanyl-D-alanine + di-trans,octa-cis-undecaprenyl phosphate = di-trans,octa-cis-undecaprenyl diphospho-N-acetyl-alpha-D-muramoyl-L-alanyl-D-glutamyl-meso-2,6-diaminopimeloyl-D-alanyl-D-alanine + UMP. The protein operates within cell wall biogenesis; peptidoglycan biosynthesis. In terms of biological role, catalyzes the initial step of the lipid cycle reactions in the biosynthesis of the cell wall peptidoglycan: transfers peptidoglycan precursor phospho-MurNAc-pentapeptide from UDP-MurNAc-pentapeptide onto the lipid carrier undecaprenyl phosphate, yielding undecaprenyl-pyrophosphoryl-MurNAc-pentapeptide, known as lipid I. This is Phospho-N-acetylmuramoyl-pentapeptide-transferase from Shewanella sediminis (strain HAW-EB3).